An 845-amino-acid chain; its full sequence is Translation initiation factor IF-2 (845 aa).

Disordered regions lie at residues 45-91 (RRKI…SNLS) and 127-209 (EESL…TPKV). Positions 81-91 (SESSMAKSNLS) are enriched in polar residues. Positions 137–149 (TEIHQEEQKEEKN) are enriched in basic and acidic residues. Polar residues predominate over residues 151 to 162 (PVQTSPLSSAHS). Over residues 179 to 193 (TEKRKADEIKNDDRH) the composition is skewed to basic and acidic residues. Residues 343 to 512 (PRPPVVTIMG…LLQAELLDLK (170 aa)) form the tr-type G domain. Residues 352 to 359 (GHVDHGKT) are G1. A GTP-binding site is contributed by 352 to 359 (GHVDHGKT). Residues 377–381 (GITQH) are G2. The G3 stretch occupies residues 398 to 401 (DTPG). GTP contacts are provided by residues 398–402 (DTPGH) and 452–455 (NKID). Residues 452–455 (NKID) form a G4 region. Positions 488-490 (SAK) are G5.

It belongs to the TRAFAC class translation factor GTPase superfamily. Classic translation factor GTPase family. IF-2 subfamily.

It is found in the cytoplasm. Functionally, one of the essential components for the initiation of protein synthesis. Protects formylmethionyl-tRNA from spontaneous hydrolysis and promotes its binding to the 30S ribosomal subunits. Also involved in the hydrolysis of GTP during the formation of the 70S ribosomal complex. This is Translation initiation factor IF-2 from Bartonella quintana (strain Toulouse) (Rochalimaea quintana).